The chain runs to 430 residues: Serine--tRNA ligase (430 aa).

Residue 237-239 (TAE) coordinates L-serine. ATP is bound at residue 268-270 (RSE). Glu291 is an L-serine binding site. Residue 355–358 (EISS) coordinates ATP. Position 391 (Ser391) interacts with L-serine.

This sequence belongs to the class-II aminoacyl-tRNA synthetase family. Type-1 seryl-tRNA synthetase subfamily. Homodimer. The tRNA molecule binds across the dimer.

It localises to the cytoplasm. The catalysed reaction is tRNA(Ser) + L-serine + ATP = L-seryl-tRNA(Ser) + AMP + diphosphate + H(+). It catalyses the reaction tRNA(Sec) + L-serine + ATP = L-seryl-tRNA(Sec) + AMP + diphosphate + H(+). Its pathway is aminoacyl-tRNA biosynthesis; selenocysteinyl-tRNA(Sec) biosynthesis; L-seryl-tRNA(Sec) from L-serine and tRNA(Sec): step 1/1. Catalyzes the attachment of serine to tRNA(Ser). Is also able to aminoacylate tRNA(Sec) with serine, to form the misacylated tRNA L-seryl-tRNA(Sec), which will be further converted into selenocysteinyl-tRNA(Sec). This is Serine--tRNA ligase from Salmonella heidelberg (strain SL476).